Here is a 463-residue protein sequence, read N- to C-terminus: Paraneoplastic antigen Ma3 (463 aa).

A disordered region spans residues 363-410 (VGAVPLPASGNSFDARPSQGYRRRRGRGQHRRGGVARAGSRGSRKRKR). Residues 383–396 (YRRRRGRGQHRRGG) show a composition bias toward basic residues. Residues 412–429 (TFCYSCGEDGHIRVQCIN) form a CCHC-type zinc finger. The segment at 440–463 (KQAAVESGNGNWAWDKSHPKSKAK) is disordered.

This sequence belongs to the PNMA family. In terms of tissue distribution, expressed at high levels in the brain and testis. Expressed at lower levels in the heart, trachea and kidney.

Its subcellular location is the nucleus. The protein localises to the nucleolus. In Homo sapiens (Human), this protein is Paraneoplastic antigen Ma3 (PNMA3).